The sequence spans 517 residues: Cytochrome P450 monooxygenase penP (517 aa).

The helical transmembrane segment at 17–37 (GEATVIWILVALVLVAYLILP) threads the bilayer. C456 contributes to the heme binding site. N501 is a glycosylation site (N-linked (GlcNAc...) asparagine).

Belongs to the cytochrome P450 family. It depends on heme as a cofactor.

The protein localises to the membrane. It participates in secondary metabolite biosynthesis. In terms of biological role, cytochrome P450 monooxygenase; part of the gene cluster that mediates the biosynthesis of the indole diterpenes penitrems. The geranylgeranyl diphosphate (GGPP) synthase penG catalyzes the first step in penitrem biosynthesis via conversion of farnesyl pyrophosphate and isopentyl pyrophosphate into geranylgeranyl pyrophosphate (GGPP). Condensation of indole-3-glycerol phosphate with GGPP by the prenyl transferase penC then forms 3-geranylgeranylindole (3-GGI). Epoxidation by the FAD-dependent monooxygenase penM leads to a epoxidized-GGI that is substrate of the terpene cyclase penB for cyclization to yield paspaline. Paspaline is subsequently converted to 13-desoxypaxilline by the cytochrome P450 monooxygenase penP, the latter being then converted to paxilline by the cytochrome P450 monooxygenase penQ. Paxilline is converted to beta-paxitriol via C-10 ketoreduction by the short-chain dehydrogenase PC-15 which can be monoprenylated at the C-20 by the indole diterpene prenyltransferase penD. A two-step elimination (acetylation and elimination) process performed by the O-acetyltransferase PC-16 and the P.simplicissimum ptmI-ortholog not yet identified in P.crustosum, leads to the production of the prenylated form of penijanthine. The FAD-linked oxidoreductase ptmO then converts the prenylated form of penijanthine into PC-M5 which is in turn transformed into PC-M4 by the aromatic dimethylallyltransferase PC-22. A series of oxidation steps involving 4 cytochrome P450 monooxygenases (PC-21, PC-05, PC-23, PC-20) and a FAD-dependent monooxygenase (PC-14) are required for the transformation of PC-M4 to penitrems A and E. Synthesis of these final products is proposed to proceed via penitrems D and C (PC-21, PC-05, PC-14) and penitrems B and F (PC-21, PC-05, PC-14, PC-23). The polypeptide is Cytochrome P450 monooxygenase penP (Penicillium crustosum (Blue mold fungus)).